A 628-amino-acid chain; its full sequence is RING finger protein 112 (628 aa).

Residues 57 to 98 (CSICLERPREPISLDCGHDFCPRCFSTHRVPGCGPPCCPECR) form an RING-type zinc finger. The interaction with ZBTB16 stretch occupies residues 132 to 628 (AVRAEPLLLV…GDREPLLQEE (497 aa)). In terms of domain architecture, GB1/RHD3-type G spans 167-409 (DTPVCLLAVL…RCPGYWSEGR (243 aa)). 318–319 (RD) contacts GTP. 2 helical membrane passes run 544-564 (LAAV…GVVG) and 577-597 (GMVA…GGGV).

It belongs to the TRAFAC class dynamin-like GTPase superfamily. GB1/RHD3 GTPase family. GB1 subfamily. As to quaternary structure, self-associates. Interacts with SP1 in an oxidative stress-regulated manner. Interacts with SIGMAR1 in an oxidative stress-regulated manner. Interacts with ZBTB16 (via C2H2-type zinc finger domains 1 and 2). Post-translationally, auto-ubiquitinated.

It localises to the membrane. Its subcellular location is the cytoplasm. The protein localises to the nucleus. The protein resides in the nuclear body. It is found in the nucleoplasm. It localises to the endosome. Its subcellular location is the cytoplasmic vesicle. The protein localises to the secretory vesicle. The protein resides in the synaptic vesicle. It is found in the postsynaptic density. It localises to the perikaryon. Its subcellular location is the cell projection. The protein localises to the neuron projection. The enzyme catalyses S-ubiquitinyl-[E2 ubiquitin-conjugating enzyme]-L-cysteine + [acceptor protein]-L-lysine = [E2 ubiquitin-conjugating enzyme]-L-cysteine + N(6)-ubiquitinyl-[acceptor protein]-L-lysine.. It functions in the pathway protein modification; protein ubiquitination. E3 ubiquitin-protein ligase that plays an important role in neuronal differentiation, including neurogenesis and gliogenesis, during brain development. During embryonic development initiates neuronal differentiation by inducing cell cycle arrest at the G0/G1 phase through up-regulation of cell-cycle regulatory proteins. Plays a role not only in the fetal period during the development of the nervous system, but also in the adult brain, where it is involved in the maintenance of neural functions and protection of the nervous tissue cells from oxidative stress-induced damage. Exhibits GTPase and E3 ubiquitin-protein ligase activities. Regulates dendritic spine density and synaptic neurotransmission; its ability to hydrolyze GTP is involved in the maintenance of dendritic spine density. The chain is RING finger protein 112 (RNF112) from Bos taurus (Bovine).